Consider the following 411-residue polypeptide: LL-diaminopimelate aminotransferase (411 aa).

Residues Tyr-15 and Gly-42 each coordinate substrate. Pyridoxal 5'-phosphate contacts are provided by residues Tyr-72, 108–109 (SK), Tyr-132, Asn-187, Tyr-218, and 246–248 (SFS). Substrate contacts are provided by Lys-109, Tyr-132, and Asn-187. Lys-249 is subject to N6-(pyridoxal phosphate)lysine. Pyridoxal 5'-phosphate-binding residues include Arg-257 and Asn-292. Asn-292 and Arg-388 together coordinate substrate.

It belongs to the class-I pyridoxal-phosphate-dependent aminotransferase family. LL-diaminopimelate aminotransferase subfamily. In terms of assembly, homodimer. It depends on pyridoxal 5'-phosphate as a cofactor.

The enzyme catalyses (2S,6S)-2,6-diaminopimelate + 2-oxoglutarate = (S)-2,3,4,5-tetrahydrodipicolinate + L-glutamate + H2O + H(+). It participates in amino-acid biosynthesis; L-lysine biosynthesis via DAP pathway; LL-2,6-diaminopimelate from (S)-tetrahydrodipicolinate (aminotransferase route): step 1/1. Involved in the synthesis of meso-diaminopimelate (m-DAP or DL-DAP), required for both lysine and peptidoglycan biosynthesis. Catalyzes the direct conversion of tetrahydrodipicolinate to LL-diaminopimelate. The protein is LL-diaminopimelate aminotransferase of Geobacter sp. (strain M21).